Consider the following 190-residue polypeptide: Glutathione peroxidase 2 (190 aa).

U40 is a catalytic residue. U40 is a non-standard amino acid (selenocysteine).

The protein belongs to the glutathione peroxidase family. In terms of assembly, homotetramer.

It localises to the cytoplasm. The protein localises to the cytosol. The enzyme catalyses 2 glutathione + H2O2 = glutathione disulfide + 2 H2O. It carries out the reaction a hydroperoxy polyunsaturated fatty acid + 2 glutathione = a hydroxy polyunsaturated fatty acid + glutathione disulfide + H2O. It catalyses the reaction tert-butyl hydroperoxide + 2 glutathione = tert-butanol + glutathione disulfide + H2O. The catalysed reaction is cumene hydroperoxide + 2 glutathione = 2-phenylpropan-2-ol + glutathione disulfide + H2O. The enzyme catalyses (13S)-hydroperoxy-(9Z,11E)-octadecadienoate + 2 glutathione = (13S)-hydroxy-(9Z,11E)-octadecadienoate + glutathione disulfide + H2O. It carries out the reaction (5S)-hydroperoxy-(6E,8Z,11Z,14Z)-eicosatetraenoate + 2 glutathione = (5S)-hydroxy-(6E,8Z,11Z,14Z)-eicosatetraenoate + glutathione disulfide + H2O. It catalyses the reaction (12R)-hydroperoxy-(5Z,8Z,10E,14Z)-eicosatetraenoate + 2 glutathione = (12R)-hydroxy-(5Z,8Z,10E,14Z)-eicosatetraenoate + glutathione disulfide + H2O. The catalysed reaction is (15S)-hydroperoxy-(5Z,8Z,11Z,13E)-eicosatetraenoate + 2 glutathione = (15S)-hydroxy-(5Z,8Z,11Z,13E)-eicosatetraenoate + glutathione disulfide + H2O. In terms of biological role, catalyzes the reduction of hydroperoxides in a glutathione-dependent manner thus regulating cellular redox homeostasis. Can reduce small soluble hydroperoxides such as H2O2, cumene hydroperoxide and tert-butyl hydroperoxide, as well as several fatty acid-derived hydroperoxides. Cannot reduce phosphatidycholine hydroperoxide. This Pongo pygmaeus (Bornean orangutan) protein is Glutathione peroxidase 2 (GPX2).